The chain runs to 38 residues: Photosystem II reaction center protein L (38 aa).

The helical transmembrane segment at 17–37 (SLYWGLLLIFVLAVLFSNYSF) threads the bilayer.

This sequence belongs to the PsbL family. As to quaternary structure, PSII is composed of 1 copy each of membrane proteins PsbA, PsbB, PsbC, PsbD, PsbE, PsbF, PsbH, PsbI, PsbJ, PsbK, PsbL, PsbM, PsbT, PsbX, PsbY, PsbZ, Psb30/Ycf12, at least 3 peripheral proteins of the oxygen-evolving complex and a large number of cofactors. It forms dimeric complexes.

The protein localises to the plastid. The protein resides in the chloroplast thylakoid membrane. One of the components of the core complex of photosystem II (PSII). PSII is a light-driven water:plastoquinone oxidoreductase that uses light energy to abstract electrons from H(2)O, generating O(2) and a proton gradient subsequently used for ATP formation. It consists of a core antenna complex that captures photons, and an electron transfer chain that converts photonic excitation into a charge separation. This subunit is found at the monomer-monomer interface and is required for correct PSII assembly and/or dimerization. The protein is Photosystem II reaction center protein L of Bowenia serrulata (Byfield fern).